A 122-amino-acid chain; its full sequence is Large ribosomal subunit protein uL14 (122 aa).

This sequence belongs to the universal ribosomal protein uL14 family. In terms of assembly, part of the 50S ribosomal subunit. Forms a cluster with proteins L3 and L19. In the 70S ribosome, L14 and L19 interact and together make contacts with the 16S rRNA in bridges B5 and B8.

Functionally, binds to 23S rRNA. Forms part of two intersubunit bridges in the 70S ribosome. The chain is Large ribosomal subunit protein uL14 from Bacillus velezensis (strain DSM 23117 / BGSC 10A6 / LMG 26770 / FZB42) (Bacillus amyloliquefaciens subsp. plantarum).